A 414-amino-acid polypeptide reads, in one-letter code: Phospholipase A1-IIbeta (414 aa).

Lysine 19 is covalently cross-linked (Glycyl lysine isopeptide (Lys-Gly) (interchain with G-Cter in ubiquitin)). The stretch at aspartate 191–isoleucine 217 forms a coiled coil. The Acyl-ester intermediate role is filled by serine 223. Catalysis depends on charge relay system residues serine 223, aspartate 289, and histidine 326. The segment at aspartate 386–proline 414 is disordered. The stretch at lysine 390–asparagine 410 forms a coiled coil. Positions asparagine 392 to glutamate 401 are enriched in basic and acidic residues.

This sequence belongs to the AB hydrolase superfamily. Lipase family.

The protein localises to the cytoplasm. Its function is as follows. Acylhydrolase that catalyzes the hydrolysis of phospholipids at the sn-1 position. The protein is Phospholipase A1-IIbeta of Arabidopsis thaliana (Mouse-ear cress).